The chain runs to 247 residues: MSGKDRIEIFPSRMAQTIMKARLKGAQTGRNLLKKKSDALTLRFRQILKKIIETKMLMGEVMREAAFSLAEAKFTAGDFSTTAIQNVNKAQVKIRAKKDNVAGVTLPVFEHYHEGTDSYELTGLARGGEQLAKLKRNYAKAVELLVELASLQTSFVTLDEAIKITNRRVNAIEHVIIPRIERTLAYIITELDEREREEFYRLKKIQEKKKILKEKSEKDLEQRRAAGEVMEPANLLAEEKDEDLLFE.

It belongs to the V-ATPase D subunit family. In terms of assembly, V-ATPase is a heteromultimeric enzyme made up of two complexes: the ATP-hydrolytic V1 complex and the proton translocation V0 complex. The V1 complex consists of three catalytic AB heterodimers that form a heterohexamer, three peripheral stalks each consisting of EG heterodimers, one central rotor including subunits D and F, and the regulatory subunits C and H. The proton translocation complex V0 consists of the proton transport subunit a, a ring of proteolipid subunits c9c'', rotary subunit d, subunits e and f, and the accessory subunits ATP6AP1/Ac45 and ATP6AP2/PRR. Interacts with SNX10.

It localises to the membrane. The protein localises to the cytoplasmic vesicle. The protein resides in the clathrin-coated vesicle membrane. It is found in the cytoplasm. Its subcellular location is the cytoskeleton. It localises to the microtubule organizing center. The protein localises to the centrosome. The protein resides in the cell projection. It is found in the cilium. Subunit of the V1 complex of vacuolar(H+)-ATPase (V-ATPase), a multisubunit enzyme composed of a peripheral complex (V1) that hydrolyzes ATP and a membrane integral complex (V0) that translocates protons. V-ATPase is responsible for acidifying and maintaining the pH of intracellular compartments and in some cell types, is targeted to the plasma membrane, where it is responsible for acidifying the extracellular environment. May play a role in cilium biogenesis through regulation of the transport and the localization of proteins to the cilium. This is V-type proton ATPase subunit D (ATP6V1D) from Oryctolagus cuniculus (Rabbit).